The chain runs to 392 residues: Sterol methyltransferase-like 3 (392 aa).

Residues 20–42 traverse the membrane as a helical segment; the sequence is VTPWQAAAGVTAAIFIGSYLWHS.

Belongs to the class I-like SAM-binding methyltransferase superfamily. Erg6/SMT family.

It localises to the microsome membrane. In terms of biological role, unable to convert squalene, botryococcene, cycloartenol, zymosterol or lanosterol to mono-, di-, tri- or tetramethylated derivatives. The sequence is that of Sterol methyltransferase-like 3 (SMT-3) from Botryococcus braunii (Green alga).